The sequence spans 602 residues: Peptide-N(4)-(N-acetyl-beta-glucosaminyl)asparagine amidase (602 aa).

The 129-residue stretch at 2–130 (PVREVSRLPE…EKKFLERFVG (129 aa)) folds into the Thioredoxin domain. Zn(2+) is bound by residues cysteine 189, cysteine 192, cysteine 222, and cysteine 225. The active-site Nucleophile is the cysteine 248. Active-site residues include histidine 275 and aspartate 292. The 203-residue stretch at 400-602 (DMGGRTTGSK…ESMVVRVYMK (203 aa)) folds into the PAW domain.

This sequence belongs to the transglutaminase-like superfamily. PNGase family. Zn(2+) serves as cofactor.

It is found in the cytoplasm. The protein resides in the endoplasmic reticulum. It catalyses the reaction Hydrolysis of an N(4)-(acetyl-beta-D-glucosaminyl)asparagine residue in which the glucosamine residue may be further glycosylated, to yield a (substituted) N-acetyl-beta-D-glucosaminylamine and a peptide containing an aspartate residue.. In terms of biological role, specifically deglycosylates the denatured form of N-linked glycoproteins in the cytoplasm and assists their proteasome-mediated degradation. Cleaves the beta-aspartyl-glucosamine (GlcNAc) of the glycan and the amide side chain of Asn, converting Asn to Asp. Prefers proteins containing high-mannose over those bearing complex type oligosaccharides. Can recognize misfolded proteins in the endoplasmic reticulum that are exported to the cytosol to be destroyed and deglycosylate them, while it has no activity toward native proteins. Deglycosylation is a prerequisite for subsequent proteasome-mediated degradation of some, but not all, misfolded glycoproteins. Also displays oxidoreductase (thioredoxin) activity. The chain is Peptide-N(4)-(N-acetyl-beta-glucosaminyl)asparagine amidase (png-1) from Caenorhabditis briggsae.